The sequence spans 521 residues: Probable rhamnogalacturonase B (521 aa).

An N-terminal signal peptide occupies residues methionine 1–alanine 21. Cysteine 42 and cysteine 68 are oxidised to a cystine. N-linked (GlcNAc...) asparagine glycosylation is present at asparagine 145. The active-site Proton donor is the aspartate 219. Cysteines 221 and 238 form a disulfide. Asparagine 239 carries N-linked (GlcNAc...) asparagine glycosylation. Residue histidine 294 is part of the active site. Residue asparagine 321 is glycosylated (N-linked (GlcNAc...) asparagine). 2 disulfides stabilise this stretch: cysteine 344-cysteine 350 and cysteine 372-cysteine 381. The segment at glutamate 462 to isoleucine 521 is disordered. The span at arginine 469–proline 486 shows a compositional bias: polar residues. Residues proline 507 to isoleucine 521 show a composition bias toward basic residues.

It belongs to the glycosyl hydrolase 28 family.

The protein localises to the secreted. It catalyses the reaction Endohydrolysis of alpha-D-GalA-(1-&gt;2)-alpha-L-Rha glycosidic bond in the rhamnogalacturonan I backbone with initial inversion of anomeric configuration releasing oligosaccharides with beta-D-GalA at the reducing end.. Its function is as follows. Pectinolytic enzymes consist of four classes of enzymes: pectine lyase, polygalacturonase, pectin methylesterase and rhamnogalacturonase. Hydrolyzes alpha-D-galacturonopyranosyl-(1,2)-alpha-L-rhamnopyranosyl linkages in the backbone of the hairy regions of pectins. In Aspergillus fumigatus (strain CBS 144.89 / FGSC A1163 / CEA10) (Neosartorya fumigata), this protein is Probable rhamnogalacturonase B (rhgB).